A 37-amino-acid chain; its full sequence is Fructose-bisphosphate aldolase A (37 aa).

The protein belongs to the class I fructose-bisphosphate aldolase family. Tetramer.

The catalysed reaction is beta-D-fructose 1,6-bisphosphate = D-glyceraldehyde 3-phosphate + dihydroxyacetone phosphate. It functions in the pathway carbohydrate degradation; glycolysis; D-glyceraldehyde 3-phosphate and glycerone phosphate from D-glucose: step 4/4. Plays a key role in glycolysis and gluconeogenesis. In Thunnus albacares (Yellowfin tuna), this protein is Fructose-bisphosphate aldolase A.